The following is a 149-amino-acid chain: 3-dehydroquinate dehydratase (149 aa).

Y26 (proton acceptor) is an active-site residue. Substrate contacts are provided by N77, H83, and D90. Catalysis depends on H103, which acts as the Proton donor. Residues 104–105 and R114 each bind substrate; that span reads LS.

The protein belongs to the type-II 3-dehydroquinase family. In terms of assembly, homododecamer.

It carries out the reaction 3-dehydroquinate = 3-dehydroshikimate + H2O. Its pathway is metabolic intermediate biosynthesis; chorismate biosynthesis; chorismate from D-erythrose 4-phosphate and phosphoenolpyruvate: step 3/7. In terms of biological role, catalyzes a trans-dehydration via an enolate intermediate. This is 3-dehydroquinate dehydratase from Aeromonas salmonicida (strain A449).